The following is a 377-amino-acid chain: Probable G-protein coupled receptor F27E5.8 (377 aa).

The Extracellular portion of the chain corresponds to 1–34; that stretch reads MSEQDSSSPKYMRFLLGNFTSAEMVTDGNFLIYC. The N-linked (GlcNAc...) asparagine glycan is linked to Asn-18. The helical transmembrane segment at 35-55 threads the bilayer; sequence IEMGLLVIGVLENIFMIGAVF. At 56-71 the chain is on the cytoplasmic side; it reads STSCLHLNLRILICNC. The helical transmembrane segment at 72 to 92 threads the bilayer; sequence CLGFILMAVGRAMIAVPLCIA. Over 93–105 the chain is Extracellular; sequence HLRDVDISSHAWC. The chain crosses the membrane as a helical span at residues 106-126; it reads FIANAVHHSSADSVCLSFVFI. Residues 127–144 are Cytoplasmic-facing; sequence MLERTAGTIWSKDYEKTK. Residues 145–165 form a helical membrane-spanning segment; sequence IHIFPCIFAFLQWFIPMFMIL. At 166 to 195 the chain is on the extracellular side; that stretch reads GNFLDRANRMEHFLLYPHLPCQIEYLTPTM. The chain crosses the membrane as a helical span at residues 196 to 216; that stretch reads FMITIFIIVIGFIASVGGITI. Residues 217 to 251 are Cytoplasmic-facing; it reads VYNKNIKKYNTRDIWFNTVNLSERYQITENIRSTH. Residues 252–272 form a helical membrane-spanning segment; sequence LLFPLLALMLIFSTLSVSVLI. Residues 273–303 are Extracellular-facing; that stretch reads YGGYWVSVMTKEPARFEEVVKWFGRGGEAAQ. The helical transmembrane segment at 304 to 324 threads the bilayer; sequence LFDIITAIYTISFPICAFICH. Residues 325–377 are Cytoplasmic-facing; the sequence is PNLFRFLRKFIGWNSYAVRPSNLNEIGGFEMSTAPIRTQTEFHFQELSRQWNT.

Belongs to the G-protein coupled receptor 1 family.

It localises to the cell membrane. This chain is Probable G-protein coupled receptor F27E5.8, found in Caenorhabditis elegans.